A 217-amino-acid polypeptide reads, in one-letter code: TLD domain-containing protein 2 (217 aa).

The interval 1–48 is disordered; it reads MKSLRWRYTRLPSQVEDALSGEEDKEEEEEKEEETTPAPTPVPEHPMV. A compositionally biased stretch (acidic residues) spans 19–35; the sequence is LSGEEDKEEEEEKEEET. Positions 56 to 217 constitute a TLDc domain; sequence QVLGASEMSQ…ISELEAWVLS (162 aa).

The protein belongs to the OXR1 family.

The chain is TLD domain-containing protein 2 (TLDC2) from Bos taurus (Bovine).